The following is a 53-amino-acid chain: Collagen alpha-1(I) chain (53 aa).

Residues 1–53 (SYGYBZKSAGVSVPGPMGPSGPRGLPGPPGAPGPZGFZGPPGZPGZPGSSGPM) are disordered. Lys7 carries the allysine modification. Ser8 is subject to Phosphoserine. Residues 10 to 23 (GVSVPGPMGPSGPR) are compositionally biased toward low complexity. 4-hydroxyproline is present on residues Pro26, Pro29, Pro32, Pro41, Pro44, and Pro47. Residues 34-53 (PZGFZGPPGZPGZPGSSGPM) show a composition bias toward low complexity.

This sequence belongs to the fibrillar collagen family. In terms of assembly, trimers of one alpha 2(I) and two alpha 1(I) chains. Interacts with MRC2. Interacts with TRAM2. Interacts with MFAP4 in a Ca (2+)-dependent manner. Post-translationally, contains mostly 4-hydroxyproline. Proline residues at the third position of the tripeptide repeating unit (G-X-Y) are hydroxylated in some or all of the chains. Contains 3-hydroxyproline at a few sites. This modification occurs on the first proline residue in the sequence motif Gly-Pro-Hyp, where Hyp is 4-hydroxyproline. In terms of processing, lysine residues at the third position of the tripeptide repeating unit (G-X-Y) are 5-hydroxylated in some or all of the chains. Post-translationally, O-glycosylated on hydroxylated lysine residues. The O-linked glycan consists of a Glc-Gal disaccharide. Forms the fibrils of tendon, ligaments and bones. In bones the fibrils are mineralized with calcium hydroxyapatite.

It is found in the secreted. Its subcellular location is the extracellular space. It localises to the extracellular matrix. Its function is as follows. Type I collagen is a member of group I collagen (fibrillar forming collagen). In Oryctolagus cuniculus (Rabbit), this protein is Collagen alpha-1(I) chain (COL1A1).